Reading from the N-terminus, the 262-residue chain is Protein N-terminal and lysine N-methyltransferase EFM7 (262 aa).

S-adenosyl-L-methionine is bound by residues tryptophan 59, 86 to 88 (GAA), aspartate 108, tryptophan 143, and serine 171.

The protein belongs to the class I-like SAM-binding methyltransferase superfamily. EFM7 family.

Its subcellular location is the cytoplasm. S-adenosyl-L-methionine-dependent protein methyltransferase that trimethylates the N-terminal glycine 'Gly-2' of elongation factor 1-alpha, before also catalyzing the mono- and dimethylation of 'Lys-3'. This chain is Protein N-terminal and lysine N-methyltransferase EFM7, found in Candida albicans (strain SC5314 / ATCC MYA-2876) (Yeast).